Consider the following 288-residue polypeptide: Methyltransferase ucsB (288 aa).

S-adenosyl-L-methionine is bound by residues Asp87 and 121–122 (DA).

The protein belongs to the class I-like SAM-binding methyltransferase superfamily.

It participates in mycotoxin biosynthesis. In terms of biological role, methyltransferase; part of the gene cluster that mediates the biosynthesis of UCS1025A, a member of the pyrrolizidinone family that acts as a strong telomerase inhibitor and displays potent antibacterial and antitumor properties. These compounds share a hemiaminal-containing pyrrolizidinone core fused with a gamma-lactone, giving a furopyrrolizidine that is connected to a decalin fragment. The polyketide synthase module (PKS) of the PKS-NRPS ucsA is responsible for the synthesis of the polyketide backbone via the condensation of an acetyl-CoA starter unit with 6 malonyl-CoA units. The downstream nonribosomal peptide synthetase (NRPS) module then amidates the carboxyl end of the polyketide with a 2S,3S-methylproline derived from L-isoleucine by the 2-oxoglutarate-dependent dioxygenase ucsF which converts L-isoleucine to (4S,5S)-4-methylpyrroline-5-carboxylate that is further converted to 2S,3S-methylproline by the pyrroline-5-carboxylate reductase ucsG. Reductive release of the completed aminoacyl polyketide from the assembly line can form the 3-pyrrolin-2-one structure via an intramolecular Knoevenagel reaction. Because ucsA lacks a designated enoylreductase (ER) domain, the required activity is provided the enoyl reductase ucsL. This keto acyclic precursor is the substrate of the Diels-Alderase ucsH, that catalyzes the Diels-Alder cycloaddition. Oxidation of the 3S-methyl group to a carboxylate by the cytochrome P450 monooxygenase ucsK allows an oxa-Michael cyclization that might involve the reductase/dehydrogenase ucsI and which furnishes the furopyrrolizidine. The oxidase ucsJ likely plays a critical role in stereoselective reduction of the C5-C6 double bond to afford the required R-configured carboxylate group. Further enolization and oxidation at C5 by an unidentified enzyme affords the last intermediate that can undergo oxa-Michael cyclization to yield UCS1025A. The protein is Methyltransferase ucsB of Acremonium sp.